Here is a 309-residue protein sequence, read N- to C-terminus: Protein FdhE (309 aa).

Belongs to the FdhE family.

It is found in the cytoplasm. Necessary for formate dehydrogenase activity. This is Protein FdhE from Escherichia coli O9:H4 (strain HS).